Reading from the N-terminus, the 182-residue chain is ATP-dependent protease subunit HslV (182 aa).

Thr6 is a catalytic residue. Residues Ala164, Cys167, and Thr170 each coordinate Na(+).

This sequence belongs to the peptidase T1B family. HslV subfamily. As to quaternary structure, a double ring-shaped homohexamer of HslV is capped on each side by a ring-shaped HslU homohexamer. The assembly of the HslU/HslV complex is dependent on binding of ATP.

Its subcellular location is the cytoplasm. The enzyme catalyses ATP-dependent cleavage of peptide bonds with broad specificity.. Allosterically activated by HslU binding. Protease subunit of a proteasome-like degradation complex believed to be a general protein degrading machinery. This chain is ATP-dependent protease subunit HslV, found in Borreliella burgdorferi (strain ATCC 35210 / DSM 4680 / CIP 102532 / B31) (Borrelia burgdorferi).